The following is a 357-amino-acid chain: MGKVLEKEAFGLAAKDESGILSPFSFSRRATGEKDVRFKVLFCGICHTDLSMAKNEWGLTTYPLVPGHEIVGVVTEVGAKVKKFNAGDKVGVGYMAGSCRSCDSCNDGDENYCPKMILTSGAKNFDDTMTHGGYSDHMVCAEDFIIRIPDNLPLDGAAPLLCAGVTVYSPMKYHGLDKPGMHIGVVGLGGLGHVAVKFAKAMGTKVTVISTSERKRDEAVTRLGADAFLVSRDPKQMKDAMGTMDGIIDTVSATHPLLPLLGLLKNKGKLVMVGAPAEPLELPVFPLIFGRKMVVGSMVGGIKETQEMVDLAGKHNITADIELISADYVNTAMERLAKADVKYRFVIDVANTMKPTP.

Residue cysteine 46 participates in Zn(2+) binding. Threonine 48 serves as a coordination point for NADP(+). Residues histidine 68, glutamate 69, cysteine 99, cysteine 102, cysteine 105, cysteine 113, and cysteine 162 each coordinate Zn(2+). NADP(+)-binding positions include threonine 166, 187-192 (GLGGLG), 210-215 (STSERK), threonine 250, glycine 274, and 297-299 (SMV).

Belongs to the zinc-containing alcohol dehydrogenase family. In terms of assembly, homodimer. Zn(2+) is required as a cofactor. As to expression, expressed in the differentiation and elongation zones of primary and lateral roots. Expressed in the hypocotyl, cotyledon and leaf veins, hydathodes and trichomes. In stems, expressed in the vascular cambium region. Expressed in the style, anthers, stamen filaments, vascular tissues of sepals and stigmatic regions in flowers, and abscission, style and stigmatic regions of siliques and seed testa.

It carries out the reaction (E)-cinnamyl alcohol + NADP(+) = (E)-cinnamaldehyde + NADPH + H(+). It participates in aromatic compound metabolism; phenylpropanoid biosynthesis. Involved in lignin biosynthesis. Catalyzes the final step specific for the production of lignin monomers. Catalyzes the NADPH-dependent reduction of coniferaldehyde, 5-hydroxyconiferaldehyde, sinapaldehyde, 4-coumaraldehyde and caffeyl aldehyde to their respective alcohols. The sequence is that of Cinnamyl alcohol dehydrogenase 7 (CAD7) from Arabidopsis thaliana (Mouse-ear cress).